The chain runs to 311 residues: MQAPPPEHCPGLESEQAGKASACAGCPNQGVCSDPNKKLEDPGKALVVESMKDVKHKLLILSGKGGVGKSTVTSLLTRYLARSNPDSNFGVLDIDICGPSQPRLMGALGESVHQSGYGWSPVGIEDNVCLMSIGFLLGSVDDAIIWRGPKKNGMIRQFLSEVDWGNLDLLLLDTPPGTSDEHLSVVSYLKDDTNPESLCAVMVTTPQEVSLLDVRKEINFCKKQNIPIVGVIENMSSFRCGNCGNSSEIFPAKTGGAAAMCAEMGIPLLGSLPLDQQIAKACDSGEDITEFKNVTTEALDGICSKIIASFS.

Residues cysteine 9, cysteine 23, cysteine 26, and cysteine 32 each coordinate [4Fe-4S] cluster. Position 63 to 70 (63 to 70) interacts with ATP; that stretch reads GKGGVGKS. Residues cysteine 240 and cysteine 243 each coordinate [4Fe-4S] cluster.

Belongs to the Mrp/NBP35 ATP-binding proteins family. NUBP1/NBP35 subfamily. In terms of assembly, heterotetramer of 2 Nubp1 and 2 Nubp2 chains. It depends on [4Fe-4S] cluster as a cofactor.

The protein localises to the cytoplasm. Functionally, component of the cytosolic iron-sulfur (Fe/S) protein assembly (CIA) machinery. Required for maturation of extramitochondrial Fe-S proteins. The Nubp1-Nubp2 heterotetramer forms a Fe-S scaffold complex, mediating the de novo assembly of an Fe-S cluster and its transfer to target apoproteins. The sequence is that of Cytosolic Fe-S cluster assembly factor Nubp1 homolog from Drosophila erecta (Fruit fly).